A 20-amino-acid polypeptide reads, in one-letter code: Punein (20 aa).

In terms of domain architecture, Barwin spans 1–20 (YHYYNPEENHFCATWDASKP).

Post-translationally, the N-terminus is blocked.

This chain is Punein, found in Punica granatum (Pomegranate).